The sequence spans 341 residues: Aspartate carbamoyltransferase catalytic subunit (341 aa).

Residues arginine 89 and threonine 90 each coordinate carbamoyl phosphate. Lysine 117 serves as a coordination point for L-aspartate. Carbamoyl phosphate is bound by residues arginine 139, histidine 169, and glutamine 172. Residues arginine 202 and arginine 257 each coordinate L-aspartate. Carbamoyl phosphate-binding residues include glycine 298 and proline 299.

The protein belongs to the aspartate/ornithine carbamoyltransferase superfamily. ATCase family. Heterododecamer (2C3:3R2) of six catalytic PyrB chains organized as two trimers (C3), and six regulatory PyrI chains organized as three dimers (R2).

The enzyme catalyses carbamoyl phosphate + L-aspartate = N-carbamoyl-L-aspartate + phosphate + H(+). It participates in pyrimidine metabolism; UMP biosynthesis via de novo pathway; (S)-dihydroorotate from bicarbonate: step 2/3. Its function is as follows. Catalyzes the condensation of carbamoyl phosphate and aspartate to form carbamoyl aspartate and inorganic phosphate, the committed step in the de novo pyrimidine nucleotide biosynthesis pathway. The sequence is that of Aspartate carbamoyltransferase catalytic subunit from Paraburkholderia phytofirmans (strain DSM 17436 / LMG 22146 / PsJN) (Burkholderia phytofirmans).